A 457-amino-acid chain; its full sequence is tRNA modification GTPase MnmE (457 aa).

Arginine 22, glutamate 85, and arginine 124 together coordinate (6S)-5-formyl-5,6,7,8-tetrahydrofolate. Positions 219–378 constitute a TrmE-type G domain; that stretch reads GATVVIAGKP…LKEKIYDLVL (160 aa). A K(+)-binding site is contributed by asparagine 229. GTP is bound by residues 229–234, 248–254, 273–276, and 333–336; these read NTGKSS, TPVPGTT, DTAG, and NKAD. Residue serine 233 participates in Mg(2+) binding. Threonine 248, valine 250, and threonine 253 together coordinate K(+). Position 254 (threonine 254) interacts with Mg(2+). Residue lysine 457 coordinates (6S)-5-formyl-5,6,7,8-tetrahydrofolate.

This sequence belongs to the TRAFAC class TrmE-Era-EngA-EngB-Septin-like GTPase superfamily. TrmE GTPase family. As to quaternary structure, homodimer. Heterotetramer of two MnmE and two MnmG subunits. The cofactor is K(+).

It is found in the cytoplasm. Its function is as follows. Exhibits a very high intrinsic GTPase hydrolysis rate. Involved in the addition of a carboxymethylaminomethyl (cmnm) group at the wobble position (U34) of certain tRNAs, forming tRNA-cmnm(5)s(2)U34. This Syntrophus aciditrophicus (strain SB) protein is tRNA modification GTPase MnmE.